Here is a 496-residue protein sequence, read N- to C-terminus: tRNA-2-methylthio-N(6)-dimethylallyladenosine synthase (496 aa).

Residues 43 to 160 enclose the MTTase N-terminal domain; that stretch reads KKVFVTTQGC…LPELYDQSHQ (118 aa). Cys-52, Cys-89, Cys-123, Cys-204, Cys-208, and Cys-211 together coordinate [4Fe-4S] cluster. The 233-residue stretch at 190-422 folds into the Radical SAM core domain; sequence RVEGFKAFVS…QKVIIDSTLA (233 aa). The TRAM domain maps to 425-493; that stretch reads HEMVGTTTRV…PHMVKGEIEA (69 aa).

Belongs to the methylthiotransferase family. MiaB subfamily. In terms of assembly, monomer. [4Fe-4S] cluster serves as cofactor.

The protein localises to the cytoplasm. It carries out the reaction N(6)-dimethylallyladenosine(37) in tRNA + (sulfur carrier)-SH + AH2 + 2 S-adenosyl-L-methionine = 2-methylsulfanyl-N(6)-dimethylallyladenosine(37) in tRNA + (sulfur carrier)-H + 5'-deoxyadenosine + L-methionine + A + S-adenosyl-L-homocysteine + 2 H(+). Functionally, catalyzes the methylthiolation of N6-(dimethylallyl)adenosine (i(6)A), leading to the formation of 2-methylthio-N6-(dimethylallyl)adenosine (ms(2)i(6)A) at position 37 in tRNAs that read codons beginning with uridine. The sequence is that of tRNA-2-methylthio-N(6)-dimethylallyladenosine synthase from Psychrobacter arcticus (strain DSM 17307 / VKM B-2377 / 273-4).